The chain runs to 141 residues: Relaxin-3 (141 aa).

The first 24 residues, 1–24 (MAMLGLLLLASWALLGALGLQAEA), serve as a signal peptide directing secretion. Disulfide bonds link C34–C128, C46–C141, and C127–C132. Residues 54-117 (ADILAHESLG…GSPGVVRGSR (64 aa)) constitute a propeptide, connecting peptide.

Belongs to the insulin family. Heterodimer of a B chain and an A chain linked by two disulfide bonds. High expression in the brain localized to the pons/medulla with highest levels in pars ventromedialis of the dorsal tegmental nucleus. Significant expression is also detected in the spleen, thymus, lung, testis and ovary.

Its subcellular location is the secreted. May play a role in neuropeptide signaling processes. Ligand for LGR7, relaxin-3 receptor-1 and relaxin-3 receptor-2. The chain is Relaxin-3 (Rln3) from Mus musculus (Mouse).